We begin with the raw amino-acid sequence, 353 residues long: Photosystem II protein D1 (353 aa).

At threonine 2 the chain carries N-acetylthreonine. At threonine 2 the chain carries Phosphothreonine. The next 3 membrane-spanning stretches (helical) occupy residues 29–46 (YIGWFGVLMIPTLLTATA), 118–133 (HFLLGVACYMGREWEL), and 142–156 (WIAVAYSAPVAAAAA). Residue histidine 118 coordinates chlorophyll a. A pheophytin a-binding site is contributed by tyrosine 126. [CaMn4O5] cluster is bound by residues aspartate 170 and glutamate 189. Residues 197–218 (FHMLGVAGVFGGSLFSAMHGSL) form a helical membrane-spanning segment. Histidine 198 is a chlorophyll a binding site. A quinone contacts are provided by residues histidine 215 and 264–265 (SF). Histidine 215 provides a ligand contact to Fe cation. Histidine 272 is a Fe cation binding site. The helical transmembrane segment at 274 to 288 (FLAAWPVVGIWFTAL) threads the bilayer. Residues histidine 332, glutamate 333, aspartate 342, and alanine 344 each contribute to the [CaMn4O5] cluster site. Positions 345–353 (SVEAPSVNG) are excised as a propeptide.

Belongs to the reaction center PufL/M/PsbA/D family. PSII is composed of 1 copy each of membrane proteins PsbA, PsbB, PsbC, PsbD, PsbE, PsbF, PsbH, PsbI, PsbJ, PsbK, PsbL, PsbM, PsbT, PsbX, PsbY, PsbZ, Psb30/Ycf12, at least 3 peripheral proteins of the oxygen-evolving complex and a large number of cofactors. It forms dimeric complexes. The cofactor is The D1/D2 heterodimer binds P680, chlorophylls that are the primary electron donor of PSII, and subsequent electron acceptors. It shares a non-heme iron and each subunit binds pheophytin, quinone, additional chlorophylls, carotenoids and lipids. D1 provides most of the ligands for the Mn4-Ca-O5 cluster of the oxygen-evolving complex (OEC). There is also a Cl(-1) ion associated with D1 and D2, which is required for oxygen evolution. The PSII complex binds additional chlorophylls, carotenoids and specific lipids.. Post-translationally, tyr-161 forms a radical intermediate that is referred to as redox-active TyrZ, YZ or Y-Z. In terms of processing, C-terminally processed by CTPA; processing is essential to allow assembly of the oxygen-evolving complex and thus photosynthetic growth.

It localises to the plastid. It is found in the chloroplast thylakoid membrane. The catalysed reaction is 2 a plastoquinone + 4 hnu + 2 H2O = 2 a plastoquinol + O2. Photosystem II (PSII) is a light-driven water:plastoquinone oxidoreductase that uses light energy to abstract electrons from H(2)O, generating O(2) and a proton gradient subsequently used for ATP formation. It consists of a core antenna complex that captures photons, and an electron transfer chain that converts photonic excitation into a charge separation. The D1/D2 (PsbA/PsbD) reaction center heterodimer binds P680, the primary electron donor of PSII as well as several subsequent electron acceptors. In Huperzia lucidula (Shining clubmoss), this protein is Photosystem II protein D1.